The sequence spans 177 residues: ATP-dependent protease subunit HslV (177 aa).

Thr2 is an active-site residue. Na(+)-binding residues include Gly157, Cys160, and Thr163.

Belongs to the peptidase T1B family. HslV subfamily. A double ring-shaped homohexamer of HslV is capped on each side by a ring-shaped HslU homohexamer. The assembly of the HslU/HslV complex is dependent on binding of ATP.

The protein localises to the cytoplasm. It carries out the reaction ATP-dependent cleavage of peptide bonds with broad specificity.. Its activity is regulated as follows. Allosterically activated by HslU binding. Functionally, protease subunit of a proteasome-like degradation complex believed to be a general protein degrading machinery. In Aeromonas salmonicida (strain A449), this protein is ATP-dependent protease subunit HslV.